A 95-amino-acid chain; its full sequence is Aspartyl/glutamyl-tRNA(Asn/Gln) amidotransferase subunit C (95 aa).

Belongs to the GatC family. Heterotrimer of A, B and C subunits.

It carries out the reaction L-glutamyl-tRNA(Gln) + L-glutamine + ATP + H2O = L-glutaminyl-tRNA(Gln) + L-glutamate + ADP + phosphate + H(+). The catalysed reaction is L-aspartyl-tRNA(Asn) + L-glutamine + ATP + H2O = L-asparaginyl-tRNA(Asn) + L-glutamate + ADP + phosphate + 2 H(+). Functionally, allows the formation of correctly charged Asn-tRNA(Asn) or Gln-tRNA(Gln) through the transamidation of misacylated Asp-tRNA(Asn) or Glu-tRNA(Gln) in organisms which lack either or both of asparaginyl-tRNA or glutaminyl-tRNA synthetases. The reaction takes place in the presence of glutamine and ATP through an activated phospho-Asp-tRNA(Asn) or phospho-Glu-tRNA(Gln). This is Aspartyl/glutamyl-tRNA(Asn/Gln) amidotransferase subunit C from Methylobacterium nodulans (strain LMG 21967 / CNCM I-2342 / ORS 2060).